Here is a 183-residue protein sequence, read N- to C-terminus: ATP synthase subunit b, chloroplastic (183 aa).

Residues Leu27 to Leu49 traverse the membrane as a helical segment.

Belongs to the ATPase B chain family. In terms of assembly, F-type ATPases have 2 components, F(1) - the catalytic core - and F(0) - the membrane proton channel. F(1) has five subunits: alpha(3), beta(3), gamma(1), delta(1), epsilon(1). F(0) has four main subunits: a(1), b(1), b'(1) and c(10-14). The alpha and beta chains form an alternating ring which encloses part of the gamma chain. F(1) is attached to F(0) by a central stalk formed by the gamma and epsilon chains, while a peripheral stalk is formed by the delta, b and b' chains.

The protein resides in the plastid. It is found in the chloroplast thylakoid membrane. F(1)F(0) ATP synthase produces ATP from ADP in the presence of a proton or sodium gradient. F-type ATPases consist of two structural domains, F(1) containing the extramembraneous catalytic core and F(0) containing the membrane proton channel, linked together by a central stalk and a peripheral stalk. During catalysis, ATP synthesis in the catalytic domain of F(1) is coupled via a rotary mechanism of the central stalk subunits to proton translocation. Its function is as follows. Component of the F(0) channel, it forms part of the peripheral stalk, linking F(1) to F(0). This is ATP synthase subunit b, chloroplastic from Brachypodium distachyon (Purple false brome).